A 261-amino-acid chain; its full sequence is Cytochrome c oxidase subunit 3 (261 aa).

Residues 1 to 15 are Mitochondrial matrix-facing; it reads MTHQTHAYHMVNPSP. The chain crosses the membrane as a helical span at residues 16–34; the sequence is WPLTGALSALLMTSGLIMW. The Mitochondrial intermembrane segment spans residues 35–40; the sequence is FHFNST. A helical transmembrane segment spans residues 41-66; the sequence is ALLTLGLTTNMLTMYQWWRDVIREST. Over 67-72 the chain is Mitochondrial matrix; that stretch reads FQGHHT. Residues 73–105 traverse the membrane as a helical segment; it reads PAVQKGLRYGMILFIISEVLFFTGFFWAFYHSS. The Mitochondrial intermembrane segment spans residues 106-128; that stretch reads LAPTPELGGCWPPTGIHPLNPLE. The helical transmembrane segment at 129–152 threads the bilayer; the sequence is VPLLNTSVLLASGVSITWAHHSLM. Over 153–155 the chain is Mitochondrial matrix; it reads EGN. Residues 156 to 183 traverse the membrane as a helical segment; it reads RYHMLQALFITIALGVYFTLLQASEYYE. Topologically, residues 184-190 are mitochondrial intermembrane; sequence APFTISD. Residues 191–223 traverse the membrane as a helical segment; sequence GVYGSTFFVATGFHGLHVIIGSTFLIVCFFRQL. The Mitochondrial matrix portion of the chain corresponds to 224–232; sequence KFHFTSSHH. The chain crosses the membrane as a helical span at residues 233–256; the sequence is FGFEAAAWYWHFVDVVWLFLYMSI. Residues 257-261 are Mitochondrial intermembrane-facing; that stretch reads YWWGS.

It belongs to the cytochrome c oxidase subunit 3 family. As to quaternary structure, component of the cytochrome c oxidase (complex IV, CIV), a multisubunit enzyme composed of 14 subunits. The complex is composed of a catalytic core of 3 subunits MT-CO1, MT-CO2 and MT-CO3, encoded in the mitochondrial DNA, and 11 supernumerary subunits COX4I, COX5A, COX5B, COX6A, COX6B, COX6C, COX7A, COX7B, COX7C, COX8 and NDUFA4, which are encoded in the nuclear genome. The complex exists as a monomer or a dimer and forms supercomplexes (SCs) in the inner mitochondrial membrane with NADH-ubiquinone oxidoreductase (complex I, CI) and ubiquinol-cytochrome c oxidoreductase (cytochrome b-c1 complex, complex III, CIII), resulting in different assemblies (supercomplex SCI(1)III(2)IV(1) and megacomplex MCI(2)III(2)IV(2)).

It is found in the mitochondrion inner membrane. It catalyses the reaction 4 Fe(II)-[cytochrome c] + O2 + 8 H(+)(in) = 4 Fe(III)-[cytochrome c] + 2 H2O + 4 H(+)(out). Component of the cytochrome c oxidase, the last enzyme in the mitochondrial electron transport chain which drives oxidative phosphorylation. The respiratory chain contains 3 multisubunit complexes succinate dehydrogenase (complex II, CII), ubiquinol-cytochrome c oxidoreductase (cytochrome b-c1 complex, complex III, CIII) and cytochrome c oxidase (complex IV, CIV), that cooperate to transfer electrons derived from NADH and succinate to molecular oxygen, creating an electrochemical gradient over the inner membrane that drives transmembrane transport and the ATP synthase. Cytochrome c oxidase is the component of the respiratory chain that catalyzes the reduction of oxygen to water. Electrons originating from reduced cytochrome c in the intermembrane space (IMS) are transferred via the dinuclear copper A center (CU(A)) of subunit 2 and heme A of subunit 1 to the active site in subunit 1, a binuclear center (BNC) formed by heme A3 and copper B (CU(B)). The BNC reduces molecular oxygen to 2 water molecules using 4 electrons from cytochrome c in the IMS and 4 protons from the mitochondrial matrix. The sequence is that of Cytochrome c oxidase subunit 3 (MT-CO3) from Ovis aries (Sheep).